We begin with the raw amino-acid sequence, 412 residues long: Arginine biosynthesis bifunctional protein ArgJ (412 aa).

6 residues coordinate substrate: T158, K184, T195, E284, N407, and S412. The active-site Nucleophile is T195.

This sequence belongs to the ArgJ family. In terms of assembly, heterotetramer of two alpha and two beta chains.

It localises to the cytoplasm. It carries out the reaction N(2)-acetyl-L-ornithine + L-glutamate = N-acetyl-L-glutamate + L-ornithine. It catalyses the reaction L-glutamate + acetyl-CoA = N-acetyl-L-glutamate + CoA + H(+). It participates in amino-acid biosynthesis; L-arginine biosynthesis; L-ornithine and N-acetyl-L-glutamate from L-glutamate and N(2)-acetyl-L-ornithine (cyclic): step 1/1. It functions in the pathway amino-acid biosynthesis; L-arginine biosynthesis; N(2)-acetyl-L-ornithine from L-glutamate: step 1/4. Functionally, catalyzes two activities which are involved in the cyclic version of arginine biosynthesis: the synthesis of N-acetylglutamate from glutamate and acetyl-CoA as the acetyl donor, and of ornithine by transacetylation between N(2)-acetylornithine and glutamate. This Bartonella quintana (strain Toulouse) (Rochalimaea quintana) protein is Arginine biosynthesis bifunctional protein ArgJ.